Here is a 64-residue protein sequence, read N- to C-terminus: Conotoxin Vc1.3 (64 aa).

The N-terminal stretch at 1–21 (MGMRMMFTVFLLVVLATTVVS) is a signal peptide. Residues 22–43 (FTSDRASDGRKAAASDLITLTI) constitute a propeptide that is removed on maturation. Intrachain disulfides connect cysteine 46–cysteine 52 and cysteine 47–cysteine 60. Cysteine 60 bears the Cysteine amide mark.

Belongs to the conotoxin A superfamily. Expressed by the venom duct.

It is found in the secreted. Functionally, may act as a toxin. The chain is Conotoxin Vc1.3 from Conus victoriae (Queen Victoria cone).